Reading from the N-terminus, the 431-residue chain is Glutamate-1-semialdehyde 2,1-aminomutase (431 aa).

Position 269 is an N6-(pyridoxal phosphate)lysine (K269).

The protein belongs to the class-III pyridoxal-phosphate-dependent aminotransferase family. HemL subfamily. In terms of assembly, homodimer. It depends on pyridoxal 5'-phosphate as a cofactor.

It localises to the cytoplasm. It catalyses the reaction (S)-4-amino-5-oxopentanoate = 5-aminolevulinate. The protein operates within porphyrin-containing compound metabolism; protoporphyrin-IX biosynthesis; 5-aminolevulinate from L-glutamyl-tRNA(Glu): step 2/2. The chain is Glutamate-1-semialdehyde 2,1-aminomutase from Francisella tularensis subsp. tularensis (strain WY96-3418).